Consider the following 198-residue polypeptide: Na(+)-translocating NADH-quinone reductase subunit E (198 aa).

The next 6 helical transmembrane spans lie at 11 to 31 (AVFVENMALAFFLGMCTFLAV), 35 to 55 (VSTAFGLGIAVTLVLGISVPV), 77 to 97 (FLNFITFIGVIAALVQILEMI), 110 to 130 (GIFLPLITVNCAIFGGVSFMV), 140 to 160 (VVYGFGSGTGWMLAIVAMAGI), and 176 to 196 (LGITFITTGLMALGFMSFSGV).

This sequence belongs to the NqrDE/RnfAE family. In terms of assembly, composed of six subunits; NqrA, NqrB, NqrC, NqrD, NqrE and NqrF.

It localises to the cell inner membrane. The catalysed reaction is a ubiquinone + n Na(+)(in) + NADH + H(+) = a ubiquinol + n Na(+)(out) + NAD(+). NQR complex catalyzes the reduction of ubiquinone-1 to ubiquinol by two successive reactions, coupled with the transport of Na(+) ions from the cytoplasm to the periplasm. NqrA to NqrE are probably involved in the second step, the conversion of ubisemiquinone to ubiquinol. The polypeptide is Na(+)-translocating NADH-quinone reductase subunit E (Serratia proteamaculans (strain 568)).